The chain runs to 295 residues: Host-inducible protein A (295 aa).

A disordered region spans residues 1-20 (MHLDRSDSNGGSSRYTLDHE).

It belongs to the NopP family.

The chain is Host-inducible protein A from Rhizobium fredii (Sinorhizobium fredii).